Here is a 182-residue protein sequence, read N- to C-terminus: Fatty-acid and retinol-binding protein 1 (182 aa).

The first 17 residues, 1–17 (MIRATIILAAVAALAFS), serve as a signal peptide directing secretion. Positions 86 to 106 (EKASKLHQIVKDKVNALNDEA) form a coiled coil.

The protein belongs to the fatty-acid and retinol-binding protein (FARBP) family.

It localises to the secreted. Functionally, probably binds lipids. In Caenorhabditis elegans, this protein is Fatty-acid and retinol-binding protein 1 (far-1).